The sequence spans 327 residues: Zinc transport protein ZntB (327 aa).

The Cytoplasmic segment spans residues 1–273; sequence MEGIKGSEVN…SRRTYTMSLM (273 aa). The chain crosses the membrane as a helical span at residues 274–294; sequence AMVFLPSTFLTGLFGVNLGGI. The Periplasmic portion of the chain corresponds to 295–300; the sequence is PGGGYQ. A helical membrane pass occupies residues 301-321; it reads FGFSAFCIMLVVLIGGVAWWL. At 322 to 327 the chain is on the cytoplasmic side; sequence HRSKWL.

The protein belongs to the CorA metal ion transporter (MIT) (TC 1.A.35) family.

It localises to the cell inner membrane. The catalysed reaction is Zn(2+)(out) + H(+)(out) = Zn(2+)(in) + H(+)(in). In terms of biological role, zinc transporter. Acts as a Zn(2+):proton symporter, which likely mediates zinc ion uptake. This chain is Zinc transport protein ZntB, found in Enterobacter sp. (strain 638).